We begin with the raw amino-acid sequence, 556 residues long: 2-isopropylmalate synthase (556 aa).

The region spanning 33 to 307 is the Pyruvate carboxyltransferase domain; sequence PIWCSSDLRD…NPGLDFSDID (275 aa). Mg(2+) contacts are provided by Asp-42, His-246, His-248, and Asn-282. The tract at residues 439 to 556 is regulatory domain; sequence ANVPYALISH…SLSQTQAKAA (118 aa).

It belongs to the alpha-IPM synthase/homocitrate synthase family. LeuA type 2 subfamily. In terms of assembly, homodimer. Mg(2+) serves as cofactor.

Its subcellular location is the cytoplasm. It catalyses the reaction 3-methyl-2-oxobutanoate + acetyl-CoA + H2O = (2S)-2-isopropylmalate + CoA + H(+). It functions in the pathway amino-acid biosynthesis; L-leucine biosynthesis; L-leucine from 3-methyl-2-oxobutanoate: step 1/4. Catalyzes the condensation of the acetyl group of acetyl-CoA with 3-methyl-2-oxobutanoate (2-ketoisovalerate) to form 3-carboxy-3-hydroxy-4-methylpentanoate (2-isopropylmalate). This is 2-isopropylmalate synthase from Pseudomonas syringae pv. syringae (strain B728a).